The following is a 307-amino-acid chain: 4-hydroxybenzoate octaprenyltransferase (307 aa).

The next 9 helical transmembrane spans lie at 19–39 (PVGI…AAMG), 48–68 (VTAG…AILM), 105–125 (AIAA…FLPI), 127–147 (VFYW…MKRY), 150–170 (LPQV…YVAI), 172–192 (GAAD…TVAY), 221–241 (VIII…VMWH), 243–263 (FVPT…AMMF), and 282–302 (FLAN…ACVW).

It belongs to the UbiA prenyltransferase family. Mg(2+) serves as cofactor.

It is found in the cell inner membrane. The enzyme catalyses all-trans-octaprenyl diphosphate + 4-hydroxybenzoate = 4-hydroxy-3-(all-trans-octaprenyl)benzoate + diphosphate. It functions in the pathway cofactor biosynthesis; ubiquinone biosynthesis. Functionally, catalyzes the prenylation of para-hydroxybenzoate (PHB) with an all-trans polyprenyl group. Mediates the second step in the final reaction sequence of ubiquinone-8 (UQ-8) biosynthesis, which is the condensation of the polyisoprenoid side chain with PHB, generating the first membrane-bound Q intermediate 3-octaprenyl-4-hydroxybenzoate. The protein is 4-hydroxybenzoate octaprenyltransferase of Psychrobacter arcticus (strain DSM 17307 / VKM B-2377 / 273-4).